Consider the following 425-residue polypeptide: Gamma-glutamyl phosphate reductase (425 aa).

This sequence belongs to the gamma-glutamyl phosphate reductase family.

The protein localises to the cytoplasm. It carries out the reaction L-glutamate 5-semialdehyde + phosphate + NADP(+) = L-glutamyl 5-phosphate + NADPH + H(+). The protein operates within amino-acid biosynthesis; L-proline biosynthesis; L-glutamate 5-semialdehyde from L-glutamate: step 2/2. Functionally, catalyzes the NADPH-dependent reduction of L-glutamate 5-phosphate into L-glutamate 5-semialdehyde and phosphate. The product spontaneously undergoes cyclization to form 1-pyrroline-5-carboxylate. This Symbiobacterium thermophilum (strain DSM 24528 / JCM 14929 / IAM 14863 / T) protein is Gamma-glutamyl phosphate reductase.